Here is a 260-residue protein sequence, read N- to C-terminus: Tropinone reductase 2 (260 aa).

18–41 serves as a coordination point for NADP(+); the sequence is SRGIGYGIVEELASLGASVYTCSR. Substrate is bound at residue serine 146. Residue tyrosine 159 is the Proton acceptor of the active site. 192–196 is an NADP(+) binding site; that stretch reads IATSL.

Belongs to the short-chain dehydrogenases/reductases (SDR) family. Homodimer.

It carries out the reaction pseudotropine + NADP(+) = tropinone + NADPH + H(+). The protein operates within alkaloid biosynthesis; tropane alkaloid biosynthesis. Its function is as follows. Catalyzes the stereospecific reduction of tropinone to pseudotropine. The sequence is that of Tropinone reductase 2 (TR2) from Datura stramonium (Jimsonweed).